We begin with the raw amino-acid sequence, 225 residues long: Uridylate kinase (225 aa).

9-10 is a binding site for ATP; the sequence is GS. Gly44 contributes to the UMP binding site. Positions 45 and 49 each coordinate ATP. UMP is bound by residues Asp66 and 114–120; that span reads THPGHTT. ATP-binding residues include Thr140, Asn141, Tyr146, and Asp149.

Belongs to the UMP kinase family. As to quaternary structure, homohexamer.

It localises to the cytoplasm. It catalyses the reaction UMP + ATP = UDP + ADP. Its pathway is pyrimidine metabolism; CTP biosynthesis via de novo pathway; UDP from UMP (UMPK route): step 1/1. With respect to regulation, inhibited by UTP. Catalyzes the reversible phosphorylation of UMP to UDP. This Thermococcus sibiricus (strain DSM 12597 / MM 739) protein is Uridylate kinase.